Reading from the N-terminus, the 383-residue chain is 8-amino-7-oxononanoate synthase (383 aa).

Positions 27 and 34 each coordinate substrate. 114-115 (GY) contacts pyridoxal 5'-phosphate. H139 contacts substrate. Residues S187, 212–215 (DDAH), and 232–235 (TLSK) contribute to the pyridoxal 5'-phosphate site. K235 is subject to N6-(pyridoxal phosphate)lysine. T344 lines the substrate pocket.

This sequence belongs to the class-II pyridoxal-phosphate-dependent aminotransferase family. BioF subfamily. In terms of assembly, homodimer. Pyridoxal 5'-phosphate is required as a cofactor.

The enzyme catalyses 6-carboxyhexanoyl-[ACP] + L-alanine + H(+) = (8S)-8-amino-7-oxononanoate + holo-[ACP] + CO2. It functions in the pathway cofactor biosynthesis; biotin biosynthesis. In terms of biological role, catalyzes the decarboxylative condensation of pimeloyl-[acyl-carrier protein] and L-alanine to produce 8-amino-7-oxononanoate (AON), [acyl-carrier protein], and carbon dioxide. This Methylorubrum extorquens (strain CM4 / NCIMB 13688) (Methylobacterium extorquens) protein is 8-amino-7-oxononanoate synthase.